The chain runs to 182 residues: Ribosome hibernation promotion factor (182 aa).

The protein belongs to the HPF/YfiA ribosome-associated protein family. Long HPF subfamily. As to quaternary structure, interacts with 100S ribosomes.

Its subcellular location is the cytoplasm. In terms of biological role, required for dimerization of active 70S ribosomes into 100S ribosomes in stationary phase; 100S ribosomes are translationally inactive and sometimes present during exponential growth. This chain is Ribosome hibernation promotion factor, found in Streptococcus pyogenes serotype M6 (strain ATCC BAA-946 / MGAS10394).